The primary structure comprises 411 residues: Histone-lysine N-methyltransferase SUV39H1-A (411 aa).

The 59-residue stretch at 43–101 (YEVEYLCNYKKHKGREFFLVKWKGYEESENTWEPLKNLKCPILLHQFRKDMKAALLQAN) folds into the Chromo domain. A Pre-SET domain is found at 178-239 (VGCECEDCVS…DCANRVVQRG (62 aa)). C180, C182, C185, C193, C194, C221, C225, C227, and C231 together coordinate Zn(2+). Positions 242–365 (YDLCIFKTDN…AGEELTFDYK (124 aa)) constitute an SET domain. S-adenosyl-L-methionine is bound by residues 253–255 (RGW), Y296, and 322–323 (NH). C325, C399, C401, and C406 together coordinate Zn(2+). Positions 395-411 (VHMECKCGVRNCRKYLF) constitute a Post-SET domain.

The protein belongs to the class V-like SAM-binding methyltransferase superfamily. Histone-lysine methyltransferase family. Suvar3-9 subfamily. In terms of tissue distribution, expressed ubuitiously.

The protein localises to the nucleus. It is found in the chromosome. It localises to the centromere. It carries out the reaction N(6)-methyl-L-lysyl(9)-[histone H3] + S-adenosyl-L-methionine = N(6),N(6)-dimethyl-L-lysyl(9)-[histone H3] + S-adenosyl-L-homocysteine + H(+). The catalysed reaction is N(6),N(6)-dimethyl-L-lysyl(9)-[histone H3] + S-adenosyl-L-methionine = N(6),N(6),N(6)-trimethyl-L-lysyl(9)-[histone H3] + S-adenosyl-L-homocysteine + H(+). Functionally, histone methyltransferase that specifically trimethylates 'Lys-9' of histone H3 using monomethylated H3 'Lys-9' as substrate. H3 'Lys-9' trimethylation represents a specific tag for epigenetic transcriptional repression by recruiting HP1 (CBX1, CBX3 and/or CBX5) proteins to methylated histones. Mainly functions in heterochromatin regions, thereby playing a central role in the establishment of constitutive heterochromatin at pericentric and telomere regions. H3 'Lys-9' trimethylation is also required to direct DNA methylation at pericentric repeats. SUV39H1 is targeted to histone H3 via its interaction with RB1 and is involved in many processes, such as regulation of organ-specific terminal differentiation during development. The sequence is that of Histone-lysine N-methyltransferase SUV39H1-A (suv39h1a) from Danio rerio (Zebrafish).